Reading from the N-terminus, the 97-residue chain is Citrate lyase acyl carrier protein (97 aa).

At S14 the chain carries O-(phosphoribosyl dephospho-coenzyme A)serine.

It belongs to the CitD family. In terms of assembly, oligomer with a subunit composition of (alpha,beta,gamma)6.

The protein resides in the cytoplasm. Covalent carrier of the coenzyme of citrate lyase. This is Citrate lyase acyl carrier protein from Lactobacillus acidophilus (strain ATCC 700396 / NCK56 / N2 / NCFM).